Reading from the N-terminus, the 524-residue chain is Alkaline phosphatase, tissue-nonspecific isozyme (524 aa).

The first 17 residues, 1 to 17 (MISPFLLLAIGTCFASS), serve as a signal peptide directing secretion. D60 provides a ligand contact to Mg(2+). Residues D60 and S110 each coordinate Zn(2+). S110 functions as the Phosphoserine intermediate in the catalytic mechanism. Phosphoserine is present on S110. The cysteines at positions 139 and 201 are disulfide-linked. A glycan (N-linked (GlcNAc...) asparagine) is linked at N140. T173 provides a ligand contact to Mg(2+). The N-linked (GlcNAc...) asparagine glycan is linked to N230. E235 lines the Ca(2+) pocket. Residue N271 is glycosylated (N-linked (GlcNAc...) asparagine). The Ca(2+) site is built by F290 and E291. N-linked (GlcNAc...) asparagine glycosylation occurs at N303. D306 contacts Ca(2+). Mg(2+) is bound at residue E332. Residues D337, H341, D378, and H379 each coordinate Zn(2+). N430 is a glycosylation site (N-linked (GlcNAc...) asparagine). Residue H454 participates in Zn(2+) binding. C489 and C497 form a disulfide bridge. Residue S499 is the site of GPI-anchor amidated serine attachment. Residues 500 to 524 (ASSSGSPSPGPLLLLLALLPLGSLF) constitute a propeptide, removed in mature form.

This sequence belongs to the alkaline phosphatase family. Homodimer. It depends on Mg(2+) as a cofactor. The cofactor is Zn(2+). Ca(2+) serves as cofactor. In terms of processing, N-glycosylated.

It localises to the cell membrane. The protein resides in the extracellular vesicle membrane. It is found in the mitochondrion membrane. The protein localises to the mitochondrion intermembrane space. It carries out the reaction a phosphate monoester + H2O = an alcohol + phosphate. It catalyses the reaction diphosphate + H2O = 2 phosphate + H(+). The enzyme catalyses pyridoxal 5'-phosphate + H2O = pyridoxal + phosphate. The catalysed reaction is phosphoethanolamine + H2O = ethanolamine + phosphate. It carries out the reaction N-phosphocreatine + H2O = creatine + phosphate. It catalyses the reaction ATP + H2O = ADP + phosphate + H(+). The enzyme catalyses ADP + H2O = AMP + phosphate + H(+). The catalysed reaction is AMP + H2O = adenosine + phosphate. Its activity is regulated as follows. Phosphatase activity is specifically inhibited by 5-((5-chloro-2-methoxyphenyl)sulfonamido)nicotinamide (SBI-425). Alkaline phosphatase that metabolizes various phosphate compounds and plays a key role in skeletal mineralization and adaptive thermogenesis. Has broad substrate specificity and can hydrolyze a considerable variety of compounds: however, only a few substrates, such as diphosphate (inorganic pyrophosphate; PPi), pyridoxal 5'-phosphate (PLP) and N-phosphocreatine are natural substrates. Plays an essential role in skeletal and dental mineralization via its ability to hydrolyze extracellular diphosphate, a potent mineralization inhibitor, to phosphate: it thereby promotes hydroxyapatite crystal formation and increases inorganic phosphate concentration. Acts in a non-redundant manner with PHOSPHO1 in skeletal mineralization: while PHOSPHO1 mediates the initiation of hydroxyapatite crystallization in the matrix vesicles (MVs), ALPL/TNAP catalyzes the spread of hydroxyapatite crystallization in the extracellular matrix. Also promotes dephosphorylation of osteopontin (SSP1), an inhibitor of hydroxyapatite crystallization in its phosphorylated state; it is however unclear whether ALPL/TNAP mediates SSP1 dephosphorylation via a direct or indirect manner. Catalyzes dephosphorylation of PLP to pyridoxal (PL), the transportable form of vitamin B6, in order to provide a sufficient amount of PLP in the brain, an essential cofactor for enzymes catalyzing the synthesis of diverse neurotransmitters. Additionally, also able to mediate ATP degradation in a stepwise manner to adenosine, thereby regulating the availability of ligands for purinergic receptors. Also capable of dephosphorylating microbial products, such as lipopolysaccharides (LPS) as well as other phosphorylated small-molecules, such as poly-inosine:cytosine (poly I:C). Acts as a key regulator of adaptive thermogenesis as part of the futile creatine cycle: localizes to the mitochondria of thermogenic fat cells and acts by mediating hydrolysis of N-phosphocreatine to initiate a futile cycle of creatine dephosphorylation and phosphorylation. During the futile creatine cycle, creatine and N-phosphocreatine are in a futile cycle, which dissipates the high energy charge of N-phosphocreatine as heat without performing any mechanical or chemical work. The sequence is that of Alkaline phosphatase, tissue-nonspecific isozyme (ALPL) from Bos taurus (Bovine).